Here is a 211-residue protein sequence, read N- to C-terminus: Uracil phosphoribosyltransferase (211 aa).

5-phospho-alpha-D-ribose 1-diphosphate is bound by residues R78, R103, and 130–138 (DPMLATGGT). Uracil contacts are provided by residues I196 and 201 to 203 (GDA). A 5-phospho-alpha-D-ribose 1-diphosphate-binding site is contributed by D202.

It belongs to the UPRTase family. It depends on Mg(2+) as a cofactor.

The catalysed reaction is UMP + diphosphate = 5-phospho-alpha-D-ribose 1-diphosphate + uracil. Its pathway is pyrimidine metabolism; UMP biosynthesis via salvage pathway; UMP from uracil: step 1/1. Its activity is regulated as follows. Allosterically activated by GTP. In terms of biological role, catalyzes the conversion of uracil and 5-phospho-alpha-D-ribose 1-diphosphate (PRPP) to UMP and diphosphate. In Beutenbergia cavernae (strain ATCC BAA-8 / DSM 12333 / CCUG 43141 / JCM 11478 / NBRC 16432 / NCIMB 13614 / HKI 0122), this protein is Uracil phosphoribosyltransferase.